The primary structure comprises 167 residues: Translationally-controlled tumor protein homolog (167 aa).

A TCTP domain is found at 1–167 (MIIYKDIFSG…WKHGIDEEKI (167 aa)).

The protein belongs to the TCTP family.

Its subcellular location is the cytoplasm. The protein localises to the cytoskeleton. Involved in protein synthesis. Involved in microtubule stabilization. In Candida glabrata (strain ATCC 2001 / BCRC 20586 / JCM 3761 / NBRC 0622 / NRRL Y-65 / CBS 138) (Yeast), this protein is Translationally-controlled tumor protein homolog.